Here is a 342-residue protein sequence, read N- to C-terminus: Mitochondrial sorting homolog (342 aa).

Residues 1–6 (MTDRNE) are Mitochondrial intermembrane-facing. Residues 7–25 (LIGVAIRVVAAAAVSFLSV) form a helical membrane-spanning segment. Residues 26 to 342 (RYLVKYLDPN…AHLLVEETLD (317 aa)) are Cytoplasmic-facing. 124–131 (GPPGCGKT) is a binding site for ATP.

This sequence belongs to the AAA ATPase family.

It localises to the mitochondrion outer membrane. Its function is as follows. Involved in intramitochondrial sorting of proteins. The polypeptide is Mitochondrial sorting homolog (mspn-1) (Caenorhabditis elegans).